A 72-amino-acid chain; its full sequence is DNA-directed RNA polymerase subunit omega (72 aa).

This sequence belongs to the RNA polymerase subunit omega family. In terms of assembly, the RNAP catalytic core consists of 2 alpha, 1 beta, 1 beta' and 1 omega subunit. When a sigma factor is associated with the core the holoenzyme is formed, which can initiate transcription.

The catalysed reaction is RNA(n) + a ribonucleoside 5'-triphosphate = RNA(n+1) + diphosphate. Functionally, promotes RNA polymerase assembly. Latches the N- and C-terminal regions of the beta' subunit thereby facilitating its interaction with the beta and alpha subunits. The protein is DNA-directed RNA polymerase subunit omega of Campylobacter lari (strain RM2100 / D67 / ATCC BAA-1060).